The sequence spans 358 residues: DNA polymerase IV (358 aa).

A UmuC domain is found at 4–185 (IIHVDMDCFY…LPLIKIPGVG (182 aa)). 2 residues coordinate Mg(2+): Asp-8 and Asp-103. Residue Glu-104 is part of the active site.

Belongs to the DNA polymerase type-Y family. As to quaternary structure, monomer. The cofactor is Mg(2+).

It is found in the cytoplasm. It carries out the reaction DNA(n) + a 2'-deoxyribonucleoside 5'-triphosphate = DNA(n+1) + diphosphate. Poorly processive, error-prone DNA polymerase involved in untargeted mutagenesis. Copies undamaged DNA at stalled replication forks, which arise in vivo from mismatched or misaligned primer ends. These misaligned primers can be extended by PolIV. Exhibits no 3'-5' exonuclease (proofreading) activity. May be involved in translesional synthesis, in conjunction with the beta clamp from PolIII. This is DNA polymerase IV from Shewanella halifaxensis (strain HAW-EB4).